Here is an 86-residue protein sequence, read N- to C-terminus: Maxadilan (86 aa).

The first 23 residues, 1 to 23 (MKQILLISLVVVLAVFAFNVAEG), serve as a signal peptide directing secretion. 2 disulfides stabilise this stretch: Cys24–Cys28 and Cys37–Cys74.

As to quaternary structure, interacts with human ADCYAP1R1. Salivary gland (at protein level).

The protein resides in the secreted. In terms of biological role, potent vasodilator. Activates mammalian ADCYAP1R1, a PAC1 receptor, and induces cAMP accumulation in host cells. Causes the development of erythema following superficial injection into the rabbit or human skin. Influences adaptive immune responses mediated by host dendritic cells. Reduces surface expression of CD80 on host dendritic cells stimulated with lipopolysaccharides (LPS) and induces concomitant increase in CD86 expression on a subpopulation of these cells. Redirects cytokine secretion by LPS-activated host dendritic cells toward type 2 responses: decreases secretion of TNF-alpha/TNF, IL-12p40/IL12B and IFN-gamma/IFNG, and increases secretion of IL6 and IL10. Reduces ability of host bone marrow-derived dendritic cells to stimulate proliferation of CD4(+) T-cells. Reprograms the effect of LPS-activated host dendritic cells on cytokine secretion profiles in host T-cells: decreases secretion of TNF-alpha/TNF and IFN-gamma/IFNG, increases secretion of IL6 and IL13, and increases secretion of pro-inflammatory cytokine IL-1beta/IL1B in mixed lymphocyte reaction (MLR) cultures. Reduces LPS-induced up-regulation of CCR7 in activated host dendritic cells. Inhibits IFN-gamma/IFNG and IL-12p40/IL12B production by human peripheral blood mononuclear cells. Increases IL6 and decreases TNF-alpha/TNF production by LPS-stimulated human monocytes. Functionally, (Microbial infection) Probably plays a critical role in the enhancement of Leishmania infectivity in the host attributed to sand fly saliva. The sequence is that of Maxadilan from Lutzomyia longipalpis (Sand fly).